Here is a 195-residue protein sequence, read N- to C-terminus: Pyridoxal 5'-phosphate synthase subunit PdxT (195 aa).

Residue 55 to 57 (GES) participates in L-glutamine binding. Cysteine 84 functions as the Nucleophile in the catalytic mechanism. L-glutamine is bound by residues arginine 111 and 139–140 (IR). Residues histidine 175 and glutamate 177 each act as charge relay system in the active site.

The protein belongs to the glutaminase PdxT/SNO family. In terms of assembly, in the presence of PdxS, forms a dodecamer of heterodimers. Only shows activity in the heterodimer.

The catalysed reaction is aldehydo-D-ribose 5-phosphate + D-glyceraldehyde 3-phosphate + L-glutamine = pyridoxal 5'-phosphate + L-glutamate + phosphate + 3 H2O + H(+). It catalyses the reaction L-glutamine + H2O = L-glutamate + NH4(+). The protein operates within cofactor biosynthesis; pyridoxal 5'-phosphate biosynthesis. Catalyzes the hydrolysis of glutamine to glutamate and ammonia as part of the biosynthesis of pyridoxal 5'-phosphate. The resulting ammonia molecule is channeled to the active site of PdxS. This chain is Pyridoxal 5'-phosphate synthase subunit PdxT, found in Methanosphaerula palustris (strain ATCC BAA-1556 / DSM 19958 / E1-9c).